A 149-amino-acid polypeptide reads, in one-letter code: Large-conductance mechanosensitive channel (149 aa).

Transmembrane regions (helical) follow at residues F8–T28 and I74–I94.

It belongs to the MscL family. Homopentamer.

It localises to the cell membrane. Functionally, channel that opens in response to stretch forces in the membrane lipid bilayer. May participate in the regulation of osmotic pressure changes within the cell. The chain is Large-conductance mechanosensitive channel from Enterococcus faecalis (strain ATCC 700802 / V583).